A 245-amino-acid polypeptide reads, in one-letter code: 3-deoxy-manno-octulosonate cytidylyltransferase (245 aa).

Belongs to the KdsB family.

It is found in the cytoplasm. It carries out the reaction 3-deoxy-alpha-D-manno-oct-2-ulosonate + CTP = CMP-3-deoxy-beta-D-manno-octulosonate + diphosphate. It functions in the pathway nucleotide-sugar biosynthesis; CMP-3-deoxy-D-manno-octulosonate biosynthesis; CMP-3-deoxy-D-manno-octulosonate from 3-deoxy-D-manno-octulosonate and CTP: step 1/1. Its pathway is bacterial outer membrane biogenesis; lipopolysaccharide biosynthesis. Its function is as follows. Activates KDO (a required 8-carbon sugar) for incorporation into bacterial lipopolysaccharide in Gram-negative bacteria. This Acidobacterium capsulatum (strain ATCC 51196 / DSM 11244 / BCRC 80197 / JCM 7670 / NBRC 15755 / NCIMB 13165 / 161) protein is 3-deoxy-manno-octulosonate cytidylyltransferase.